We begin with the raw amino-acid sequence, 399 residues long: Tryptophan synthase beta chain (399 aa).

An N6-(pyridoxal phosphate)lysine modification is found at lysine 92.

The protein belongs to the TrpB family. In terms of assembly, tetramer of two alpha and two beta chains. The cofactor is pyridoxal 5'-phosphate.

It catalyses the reaction (1S,2R)-1-C-(indol-3-yl)glycerol 3-phosphate + L-serine = D-glyceraldehyde 3-phosphate + L-tryptophan + H2O. It participates in amino-acid biosynthesis; L-tryptophan biosynthesis; L-tryptophan from chorismate: step 5/5. The beta subunit is responsible for the synthesis of L-tryptophan from indole and L-serine. In Bordetella bronchiseptica (strain ATCC BAA-588 / NCTC 13252 / RB50) (Alcaligenes bronchisepticus), this protein is Tryptophan synthase beta chain.